A 225-amino-acid polypeptide reads, in one-letter code: Uracil-DNA glycosylase (225 aa).

The active-site Proton acceptor is Asp65.

It belongs to the uracil-DNA glycosylase (UDG) superfamily. UNG family.

The protein localises to the cytoplasm. It carries out the reaction Hydrolyzes single-stranded DNA or mismatched double-stranded DNA and polynucleotides, releasing free uracil.. In terms of biological role, excises uracil residues from the DNA which can arise as a result of misincorporation of dUMP residues by DNA polymerase or due to deamination of cytosine. The protein is Uracil-DNA glycosylase of Lysinibacillus sphaericus (strain C3-41).